The primary structure comprises 168 residues: Replicase polyprotein 1ab (168 aa).

Positions 1-165 (PNTKSIDGEN…KLLNFGNHLV (165 aa)) constitute a Nidovirus-type SAM-dependent 2'-O-MTase domain.

Functionally, the replicase polyprotein of coronaviruses is a multifunctional protein: it contains the activities necessary for the transcription of negative stranded RNA, leader RNA, subgenomic mRNAs and progeny virion RNA as well as proteinases responsible for the cleavage of the polyprotein into functional products. The sequence is that of Replicase polyprotein 1ab (rep) from Canine coronavirus (strain Insavc-1) (CCoV).